The following is a 350-amino-acid chain: MIKTDILIIGAGPTGLFAVFEAGLLKLKCHILDALPQPGGQLSELYPKKPIYDIPGFPEVLAGDLVDGLMEQIKQFEPGFTLGERAETVEKQEDGTFIVTSNKGTKFHAPVIAIAGGLGSFEPRKPLIEDIEFYEDKGVKYFIKNPEKFRDKRVVIAGGGDSALDWSIFLANVASEVTLIHRRNEFRGALDSVEKVQELKSAGKIKLITPAEVIGINGAEHVESLDIEENGAHRKIECDYFIPLFGLTPKLGPIGDWGLEIEKNAIKVNNALDYQTNIPGIFAIGDVNTYPGKLKLILCGFHEATLMCQAAYGIINPGKKYVLKYTTVSGVDGFDGTRKEAPKAVVKAIV.

FAD-binding residues include Thr14, Asp33, Gln41, Tyr46, Ala86, Phe121, Asp286, and Thr327.

Belongs to the ferredoxin--NADP reductase type 2 family. Homodimer. It depends on FAD as a cofactor.

It catalyses the reaction 2 reduced [2Fe-2S]-[ferredoxin] + NADP(+) + H(+) = 2 oxidized [2Fe-2S]-[ferredoxin] + NADPH. This chain is Ferredoxin--NADP reductase, found in Flavobacterium johnsoniae (strain ATCC 17061 / DSM 2064 / JCM 8514 / BCRC 14874 / CCUG 350202 / NBRC 14942 / NCIMB 11054 / UW101) (Cytophaga johnsonae).